We begin with the raw amino-acid sequence, 158 residues long: MQRYPMTPQGHAALEAELKQLKSIDRPRITASIAEAREHGDLKENAEYHAAREQQGFCEARIRDIEAKLGGAQIIDPATLPKDGRVIFGVSVVIENMDTEEEKQYKIVGDDEADFKAGKISVNSPIARGLIGKSEGDEARIETPKGVVEYEIMKVIYD.

The protein belongs to the GreA/GreB family.

In terms of biological role, necessary for efficient RNA polymerase transcription elongation past template-encoded arresting sites. The arresting sites in DNA have the property of trapping a certain fraction of elongating RNA polymerases that pass through, resulting in locked ternary complexes. Cleavage of the nascent transcript by cleavage factors such as GreA or GreB allows the resumption of elongation from the new 3'terminus. GreA releases sequences of 2 to 3 nucleotides. The sequence is that of Transcription elongation factor GreA from Psychrobacter arcticus (strain DSM 17307 / VKM B-2377 / 273-4).